A 324-amino-acid chain; its full sequence is Probable tRNA pseudouridine synthase B (324 aa).

Residue aspartate 72 is the Nucleophile of the active site. A PUA domain is found at 239–314 (LPRVVILDSA…LVIETRKVFM (76 aa)).

Belongs to the pseudouridine synthase TruB family. Type 2 subfamily.

It carries out the reaction uridine(55) in tRNA = pseudouridine(55) in tRNA. Functionally, could be responsible for synthesis of pseudouridine from uracil-55 in the psi GC loop of transfer RNAs. This chain is Probable tRNA pseudouridine synthase B, found in Methanothermobacter thermautotrophicus (strain ATCC 29096 / DSM 1053 / JCM 10044 / NBRC 100330 / Delta H) (Methanobacterium thermoautotrophicum).